Reading from the N-terminus, the 160-residue chain is SsrA-binding protein (160 aa).

The disordered stretch occupies residues 131–160 (KKEYDKRDTEKARDSDREIQRAIRSKGKED).

Belongs to the SmpB family.

The protein localises to the cytoplasm. Its function is as follows. Required for rescue of stalled ribosomes mediated by trans-translation. Binds to transfer-messenger RNA (tmRNA), required for stable association of tmRNA with ribosomes. tmRNA and SmpB together mimic tRNA shape, replacing the anticodon stem-loop with SmpB. tmRNA is encoded by the ssrA gene; the 2 termini fold to resemble tRNA(Ala) and it encodes a 'tag peptide', a short internal open reading frame. During trans-translation Ala-aminoacylated tmRNA acts like a tRNA, entering the A-site of stalled ribosomes, displacing the stalled mRNA. The ribosome then switches to translate the ORF on the tmRNA; the nascent peptide is terminated with the 'tag peptide' encoded by the tmRNA and targeted for degradation. The ribosome is freed to recommence translation, which seems to be the essential function of trans-translation. The protein is SsrA-binding protein of Azotobacter vinelandii (strain DJ / ATCC BAA-1303).